Reading from the N-terminus, the 848-residue chain is Adenylate cyclase (848 aa).

The tract at residues M1–L535 is catalytic. Positions K541 to S848 are regulatory. The residue at position 609 (H609) is a Phosphohistidine; by CRR.

It belongs to the adenylyl cyclase class-1 family.

It is found in the cytoplasm. The enzyme catalyses ATP = 3',5'-cyclic AMP + diphosphate. This is Adenylate cyclase (cyaA) from Shigella flexneri.